We begin with the raw amino-acid sequence, 353 residues long: GTPase Obg (353 aa).

The Obg domain maps to 1 to 159 (MKFLDEAKVY…RWIWLRLKLI (159 aa)). An OBG-type G domain is found at 160–327 (ADAGLVGLPN…VLRALVAVIG (168 aa)). GTP is bound by residues 166-173 (GLPNAGKS), 191-195 (FTTLH), 212-215 (DIPG), 279-282 (NKID), and 308-310 (SGV). The Mg(2+) site is built by S173 and T193.

The protein belongs to the TRAFAC class OBG-HflX-like GTPase superfamily. OBG GTPase family. As to quaternary structure, monomer. Mg(2+) is required as a cofactor.

The protein resides in the cytoplasm. Its function is as follows. An essential GTPase which binds GTP, GDP and possibly (p)ppGpp with moderate affinity, with high nucleotide exchange rates and a fairly low GTP hydrolysis rate. Plays a role in control of the cell cycle, stress response, ribosome biogenesis and in those bacteria that undergo differentiation, in morphogenesis control. This is GTPase Obg from Rhodopseudomonas palustris (strain TIE-1).